The primary structure comprises 491 residues: Probable cobyric acid synthase (491 aa).

The GATase cobBQ-type domain occupies 252–444 (PVEVNIVKFS…LHGILENFEF (193 aa)). C330 (nucleophile) is an active-site residue. Residue H436 is part of the active site.

It belongs to the CobB/CobQ family. CobQ subfamily.

It functions in the pathway cofactor biosynthesis; adenosylcobalamin biosynthesis. Its function is as follows. Catalyzes amidations at positions B, D, E, and G on adenosylcobyrinic A,C-diamide. NH(2) groups are provided by glutamine, and one molecule of ATP is hydrogenolyzed for each amidation. This Methanococcus vannielii (strain ATCC 35089 / DSM 1224 / JCM 13029 / OCM 148 / SB) protein is Probable cobyric acid synthase.